Here is a 92-residue protein sequence, read N- to C-terminus: Sperm-specific protein Phi-1 (92 aa).

A disordered region spans residues 1-92; sequence MPSPTRRSSK…RVRAKKKKKK (92 aa). Basic residues-rich tracts occupy residues 7–19 and 29–92; these read RSSK…RSRS and AAKR…KKKK.

As to expression, sperm.

It is found in the nucleus. It localises to the chromosome. Involved in nuclear basic protein transition: histones are replaced by spermatid specific proteins which are themselves replaced by protamines in late spermatids. In Mytilus edulis (Blue mussel), this protein is Sperm-specific protein Phi-1.